The chain runs to 639 residues: UvrABC system protein C (639 aa).

A GIY-YIG domain is found at 20–97; that stretch reads ERSGVYRMFD…IKKFQPKFNI (78 aa). The 36-residue stretch at 207–242 folds into the UVR domain; it reads KELQENLSRKMEELSSQMRFEEAAEIRDRIKALSYV.

The protein belongs to the UvrC family. As to quaternary structure, interacts with UvrB in an incision complex.

The protein localises to the cytoplasm. The UvrABC repair system catalyzes the recognition and processing of DNA lesions. UvrC both incises the 5' and 3' sides of the lesion. The N-terminal half is responsible for the 3' incision and the C-terminal half is responsible for the 5' incision. The polypeptide is UvrABC system protein C (Rickettsia peacockii (strain Rustic)).